The following is a 194-amino-acid chain: 7-methyl-GTP pyrophosphatase (194 aa).

The active-site Proton acceptor is Asp69.

Belongs to the Maf family. YceF subfamily. The cofactor is a divalent metal cation.

It localises to the cytoplasm. It catalyses the reaction N(7)-methyl-GTP + H2O = N(7)-methyl-GMP + diphosphate + H(+). Its function is as follows. Nucleoside triphosphate pyrophosphatase that hydrolyzes 7-methyl-GTP (m(7)GTP). May have a dual role in cell division arrest and in preventing the incorporation of modified nucleotides into cellular nucleic acids. The sequence is that of 7-methyl-GTP pyrophosphatase from Sodalis glossinidius (strain morsitans).